The chain runs to 282 residues: NADPH-dependent 7-cyano-7-deazaguanine reductase (282 aa).

Position 88–90 (88–90 (IES)) interacts with substrate. NADPH is bound at residue 90-91 (SK). Cys190 (thioimide intermediate) is an active-site residue. The active-site Proton donor is the Asp197. 229-230 (HE) is a binding site for substrate. Residue 258-259 (RG) participates in NADPH binding.

Belongs to the GTP cyclohydrolase I family. QueF type 2 subfamily. In terms of assembly, homodimer.

It localises to the cytoplasm. It catalyses the reaction 7-aminomethyl-7-carbaguanine + 2 NADP(+) = 7-cyano-7-deazaguanine + 2 NADPH + 3 H(+). The protein operates within tRNA modification; tRNA-queuosine biosynthesis. Catalyzes the NADPH-dependent reduction of 7-cyano-7-deazaguanine (preQ0) to 7-aminomethyl-7-deazaguanine (preQ1). The protein is NADPH-dependent 7-cyano-7-deazaguanine reductase of Shigella dysenteriae serotype 1 (strain Sd197).